The following is a 305-amino-acid chain: Glycine--tRNA ligase alpha subunit (305 aa).

Belongs to the class-II aminoacyl-tRNA synthetase family. Tetramer of two alpha and two beta subunits.

The protein localises to the cytoplasm. It carries out the reaction tRNA(Gly) + glycine + ATP = glycyl-tRNA(Gly) + AMP + diphosphate. The chain is Glycine--tRNA ligase alpha subunit from Vibrio campbellii (strain ATCC BAA-1116).